A 370-amino-acid chain; its full sequence is Chorismate synthase (370 aa).

Residues 41-60 (IQGDLDRRKPGTSRHVTQRK) form a disordered region. Positions 48 and 54 each coordinate NADP(+). FMN is bound by residues 125 to 127 (RSS), 238 to 239 (NA), Gly-278, 293 to 297 (KPTSS), and Arg-319.

Belongs to the chorismate synthase family. In terms of assembly, homotetramer. Requires FMNH2 as cofactor.

It carries out the reaction 5-O-(1-carboxyvinyl)-3-phosphoshikimate = chorismate + phosphate. It functions in the pathway metabolic intermediate biosynthesis; chorismate biosynthesis; chorismate from D-erythrose 4-phosphate and phosphoenolpyruvate: step 7/7. Its function is as follows. Catalyzes the anti-1,4-elimination of the C-3 phosphate and the C-6 proR hydrogen from 5-enolpyruvylshikimate-3-phosphate (EPSP) to yield chorismate, which is the branch point compound that serves as the starting substrate for the three terminal pathways of aromatic amino acid biosynthesis. This reaction introduces a second double bond into the aromatic ring system. This is Chorismate synthase from Cupriavidus pinatubonensis (strain JMP 134 / LMG 1197) (Cupriavidus necator (strain JMP 134)).